The primary structure comprises 353 residues: Ribosomal RNA small subunit methyltransferase H (353 aa).

Residues G50 to Y52, D69, F96, D117, and Q124 contribute to the S-adenosyl-L-methionine site. The tract at residues A276–R353 is disordered.

The protein belongs to the methyltransferase superfamily. RsmH family.

Its subcellular location is the cytoplasm. It catalyses the reaction cytidine(1402) in 16S rRNA + S-adenosyl-L-methionine = N(4)-methylcytidine(1402) in 16S rRNA + S-adenosyl-L-homocysteine + H(+). Specifically methylates the N4 position of cytidine in position 1402 (C1402) of 16S rRNA. In Methylorubrum extorquens (strain CM4 / NCIMB 13688) (Methylobacterium extorquens), this protein is Ribosomal RNA small subunit methyltransferase H.